A 156-amino-acid polypeptide reads, in one-letter code: Snaclec A2 (156 aa).

Residues 1–23 (MGRLISVSFGLLVVFLSLSGTGA) form the signal peptide. 3 disulfides stabilise this stretch: cysteine 27–cysteine 38, cysteine 55–cysteine 154, and cysteine 129–cysteine 146. Residues 34–155 (HEGHCYKVFN…CGQPYRFTCE (122 aa)) enclose the C-type lectin domain.

The protein belongs to the snaclec family. As to quaternary structure, heterodimer; disulfide-linked. In terms of tissue distribution, expressed by the venom gland.

Its subcellular location is the secreted. In terms of biological role, interferes with one step of hemostasis (modulation of platelet aggregation, or coagulation cascade, for example). This Macrovipera lebetinus (Levantine viper) protein is Snaclec A2.